A 545-amino-acid chain; its full sequence is Delta 8-(E)-sphingolipid desaturase (545 aa).

The Cytochrome b5 heme-binding domain occupies 1-82 (MASHTKDALL…MLAFQIGRIQ (82 aa)). Heme contacts are provided by His42 and His65. A disordered region spans residues 97–124 (FRHYDENADSEEDDTSGQSQPPSPIFDA). A helical membrane pass occupies residues 227-247 (LGWYSVSAVFLGCFWHQLVFS). The Histidine box-1 motif lies at 249 to 253 (HDAGH). A helical membrane pass occupies residues 262-282 (VDSIIGILIADFLGGLSLGWW). The Histidine box-2 signature appears at 286-290 (HNVHH). The next 2 membrane-spanning stretches (helical) occupy residues 382–402 (IAGQIFFWIWFGYGVLYCSIP) and 408–428 (LSFLFISHMVTAPVHVQITLS). The Histidine box-3 signature appears at 470-474 (QAIHH).

The protein belongs to the fatty acid desaturase type 1 family.

It is found in the membrane. It carries out the reaction an N-acylsphing-4-enine + 2 Fe(II)-[cytochrome b5] + O2 + 2 H(+) = a (4E,8E)-4-sphinga-4,8-dienine ceramide + 2 Fe(III)-[cytochrome b5] + 2 H2O. Its pathway is lipid metabolism; sphingolipid metabolism. Its function is as follows. Delta(8)-fatty-acid desaturase which introduces a double bond at the 8-position in the long-chain base (LCB) of ceramides. Required for the formation of the di-unsaturated sphingoid base (E,E)-sphinga-4,8-dienine during glucosylceramide (GluCer) biosynthesis. Plays an important role in conidiation. The sequence is that of Delta 8-(E)-sphingolipid desaturase from Emericella nidulans (strain FGSC A4 / ATCC 38163 / CBS 112.46 / NRRL 194 / M139) (Aspergillus nidulans).